The sequence spans 351 residues: Divinyl chlorophyll a/b light-harvesting protein PcbC (351 aa).

6 consecutive transmembrane segments (helical) span residues 27-47 (FIGS…GSTL), 81-101 (GVWT…FSAV), 140-160 (FILG…VEWA), 202-222 (VMSG…WHIA), 242-262 (AVLS…AFWC), and 309-329 (LSNV…WHAL).

The protein belongs to the PsbB/PsbC family. IsiA/Pcb subfamily. In terms of assembly, the antenna complex consists of divinyl chlorophylls (a and b) and divinyl chlorophyll a/b binding proteins and binds more divinyl chlorophyll b than does the antenna complex from high-light-adapted Prochlorococcus. The cofactor is divinyl chlorophyll a. Divinyl chlorophyll b is required as a cofactor.

The protein localises to the cellular thylakoid membrane. The antenna complex functions as a light receptor, it captures and delivers excitation energy to photosystems II and I. The Prochlorales pcb genes are not related to higher plant LHCs. This is Divinyl chlorophyll a/b light-harvesting protein PcbC (pcbC) from Prochlorococcus marinus (strain NATL2A).